The following is a 64-amino-acid chain: uncharacterized protein (64 aa).

This is an uncharacterized protein from Sulfolobus islandicus filamentous virus (isolate Iceland/Hveragerdi) (SIFV).